Reading from the N-terminus, the 270-residue chain is 3-methyl-2-oxobutanoate hydroxymethyltransferase (270 aa).

Mg(2+) contacts are provided by D50 and D89. Residues D50–S51, D89, and K118 contribute to the 3-methyl-2-oxobutanoate site. E120 provides a ligand contact to Mg(2+). The active-site Proton acceptor is the E187.

The protein belongs to the PanB family. Homodecamer; pentamer of dimers. The cofactor is Mg(2+).

Its subcellular location is the cytoplasm. It carries out the reaction 3-methyl-2-oxobutanoate + (6R)-5,10-methylene-5,6,7,8-tetrahydrofolate + H2O = 2-dehydropantoate + (6S)-5,6,7,8-tetrahydrofolate. It functions in the pathway cofactor biosynthesis; (R)-pantothenate biosynthesis; (R)-pantoate from 3-methyl-2-oxobutanoate: step 1/2. Its function is as follows. Catalyzes the reversible reaction in which hydroxymethyl group from 5,10-methylenetetrahydrofolate is transferred onto alpha-ketoisovalerate to form ketopantoate. This chain is 3-methyl-2-oxobutanoate hydroxymethyltransferase, found in Helicobacter pylori (strain Shi470).